The following is a 50-amino-acid chain: Large ribosomal subunit protein bL33 (50 aa).

This sequence belongs to the bacterial ribosomal protein bL33 family.

The polypeptide is Large ribosomal subunit protein bL33 (Sulfurimonas denitrificans (strain ATCC 33889 / DSM 1251) (Thiomicrospira denitrificans (strain ATCC 33889 / DSM 1251))).